The sequence spans 368 residues: tRNA/tmRNA (uracil-C(5))-methyltransferase (368 aa).

The S-adenosyl-L-methionine site is built by Gln-192, Tyr-220, Asn-225, Glu-241, and Asp-301. The active-site Nucleophile is Cys-326. Glu-360 acts as the Proton acceptor in catalysis.

This sequence belongs to the class I-like SAM-binding methyltransferase superfamily. RNA M5U methyltransferase family. TrmA subfamily.

The catalysed reaction is uridine(54) in tRNA + S-adenosyl-L-methionine = 5-methyluridine(54) in tRNA + S-adenosyl-L-homocysteine + H(+). It catalyses the reaction uridine(341) in tmRNA + S-adenosyl-L-methionine = 5-methyluridine(341) in tmRNA + S-adenosyl-L-homocysteine + H(+). In terms of biological role, dual-specificity methyltransferase that catalyzes the formation of 5-methyluridine at position 54 (m5U54) in all tRNAs, and that of position 341 (m5U341) in tmRNA (transfer-mRNA). This is tRNA/tmRNA (uracil-C(5))-methyltransferase from Actinobacillus pleuropneumoniae serotype 7 (strain AP76).